A 586-amino-acid polypeptide reads, in one-letter code: YTH domain-containing family protein 2 (586 aa).

Disordered stretches follow at residues 98–128 (LKEK…QPVQ), 141–181 (SQDQ…KESP), and 301–464 (QGLA…PLVS). Composition is skewed to polar residues over residues 107–128 (ALRQ…QPVQ), 169–181 (TLPT…KESP), and 352–368 (SSQA…TDIQ). Basic residues predominate over residues 398-418 (CARRHRSSSPRGRSGSHKSRR). Positions 421 to 436 (TDSPVSRSTTKSTPSR) are enriched in polar residues. Residues 435–576 (SRARQPGHRD…YCGRDLLRLM (142 aa)) form the YTH domain. The span at 441-458 (GHRDYREYRDDRNRDTKP) shows a compositional bias: basic and acidic residues.

Belongs to the YTHDF family. YTHDF1 subfamily.

Its function is as follows. Specifically recognizes and binds N6-methyladenosine (m6A)-containing mRNAs, and regulates their stability. M6A is a modification present at internal sites of mRNAs and some non-coding RNAs and plays a role in mRNA stability and processing. Plays a role in pathogenicity towards plant host. The chain is YTH domain-containing family protein 2 from Pyricularia oryzae (strain 70-15 / ATCC MYA-4617 / FGSC 8958) (Rice blast fungus).